The primary structure comprises 258 residues: Protein CHAPERONE-LIKE PROTEIN OF POR1, chloroplastic (258 aa).

The transit peptide at 1-48 directs the protein to the chloroplast; sequence MSSSLLLSGSTVSSSFIAPSKPSLVRNSSKTSLLPFRNVSRSFKTVKC. Threonine 49 bears the N-acetylthreonine mark. A J-like domain required for holdase chaperone activity region spans residues 67-122; it reads WDPYKRLGVSPYASEEEIWASRNFLLQQYAGHERSEESIEGAFEKLLMSSFIRRKK. Transmembrane regions (helical) follow at residues 162–182, 207–227, and 237–257; these read FLFA…GPAF, LIGI…IPMI, and TLEL…CTFL.

Belongs to the chaperone-like protein of POR1 protein family. In terms of assembly, interacts with PORB in chloroplast. Interacts with PORA during plastid import. In terms of tissue distribution, expressed ubiquitously with higher levels in young leaves, flowers, and the root elongation zone.

It localises to the mitochondrion membrane. It is found in the plastid. The protein resides in the chloroplast envelope. Its subcellular location is the chloroplast thylakoid membrane. Its function is as follows. Essential protein required during embryogenesis. Exhibits holdase chaperone activity involved in the stabilization of NADPH:protochlorophyllide oxidoreductase (POR) proteins against photooxidative stress during POR proteins import into chloroplasts. Required for chloroplast biogenesis and development. When expressed in yeast, triggers mitochondria-mediated cell death associated with the loss of mitochondrial membrane potential. The sequence is that of Protein CHAPERONE-LIKE PROTEIN OF POR1, chloroplastic from Arabidopsis thaliana (Mouse-ear cress).